A 739-amino-acid polypeptide reads, in one-letter code: Phosphoribosylformylglycinamidine synthase subunit PurL (739 aa).

Histidine 54 is an active-site residue. ATP contacts are provided by tyrosine 57 and lysine 96. Glutamate 98 provides a ligand contact to Mg(2+). Substrate-binding positions include 99 to 102 (SHNH) and arginine 121. Residue histidine 100 is the Proton acceptor of the active site. Aspartate 122 contacts Mg(2+). Substrate is bound at residue glutamine 245. Aspartate 273 contributes to the Mg(2+) binding site. Position 317 to 319 (317 to 319 (ESQ)) interacts with substrate. Residues aspartate 500 and glycine 537 each coordinate ATP. A Mg(2+)-binding site is contributed by asparagine 538. Residue serine 540 coordinates substrate.

The protein belongs to the FGAMS family. As to quaternary structure, monomer. Part of the FGAM synthase complex composed of 1 PurL, 1 PurQ and 2 PurS subunits.

It localises to the cytoplasm. The enzyme catalyses N(2)-formyl-N(1)-(5-phospho-beta-D-ribosyl)glycinamide + L-glutamine + ATP + H2O = 2-formamido-N(1)-(5-O-phospho-beta-D-ribosyl)acetamidine + L-glutamate + ADP + phosphate + H(+). The protein operates within purine metabolism; IMP biosynthesis via de novo pathway; 5-amino-1-(5-phospho-D-ribosyl)imidazole from N(2)-formyl-N(1)-(5-phospho-D-ribosyl)glycinamide: step 1/2. Functionally, part of the phosphoribosylformylglycinamidine synthase complex involved in the purines biosynthetic pathway. Catalyzes the ATP-dependent conversion of formylglycinamide ribonucleotide (FGAR) and glutamine to yield formylglycinamidine ribonucleotide (FGAM) and glutamate. The FGAM synthase complex is composed of three subunits. PurQ produces an ammonia molecule by converting glutamine to glutamate. PurL transfers the ammonia molecule to FGAR to form FGAM in an ATP-dependent manner. PurS interacts with PurQ and PurL and is thought to assist in the transfer of the ammonia molecule from PurQ to PurL. The sequence is that of Phosphoribosylformylglycinamidine synthase subunit PurL from Bacillus cereus (strain ATCC 14579 / DSM 31 / CCUG 7414 / JCM 2152 / NBRC 15305 / NCIMB 9373 / NCTC 2599 / NRRL B-3711).